The following is a 202-amino-acid chain: Large ribosomal subunit protein bL25 (202 aa).

It belongs to the bacterial ribosomal protein bL25 family. CTC subfamily. In terms of assembly, part of the 50S ribosomal subunit; part of the 5S rRNA/L5/L18/L25 subcomplex. Contacts the 5S rRNA. Binds to the 5S rRNA independently of L5 and L18.

Functionally, this is one of the proteins that binds to the 5S RNA in the ribosome where it forms part of the central protuberance. The sequence is that of Large ribosomal subunit protein bL25 from Corynebacterium efficiens (strain DSM 44549 / YS-314 / AJ 12310 / JCM 11189 / NBRC 100395).